We begin with the raw amino-acid sequence, 400 residues long: Acetate kinase (400 aa).

Asn-10 is a binding site for Mg(2+). Lys-17 contacts ATP. Arg-91 lines the substrate pocket. The Proton donor/acceptor role is filled by Asp-150. ATP is bound by residues His-210–Gly-214, Asp-285–Arg-287, and Gly-333–Asn-337. Position 387 (Glu-387) interacts with Mg(2+).

Belongs to the acetokinase family. As to quaternary structure, homodimer. Mg(2+) is required as a cofactor. It depends on Mn(2+) as a cofactor.

It localises to the cytoplasm. The enzyme catalyses acetate + ATP = acetyl phosphate + ADP. The protein operates within metabolic intermediate biosynthesis; acetyl-CoA biosynthesis; acetyl-CoA from acetate: step 1/2. Functionally, catalyzes the formation of acetyl phosphate from acetate and ATP. Can also catalyze the reverse reaction. This chain is Acetate kinase, found in Yersinia pestis bv. Antiqua (strain Antiqua).